The sequence spans 412 residues: Transcription factor IIIA (412 aa).

The segment at 1–20 is disordered; the sequence is MSESDETKSISSLISSSSSS. Residues 9–20 are compositionally biased toward low complexity; sequence SISSLISSSSSS. C2H2-type zinc fingers lie at residues 25 to 49, 55 to 79, 85 to 107, 111 to 136, 140 to 162, 169 to 194, and 197 to 219; these read YICTYEGCDKAYNRPSLLEQHLRTH, YKCTVEDCDKAFFRKSHLETHIVSH, FHCSVCGKGVNSRQHLKRHEITH, FKCTFENCQEAFYKHQSLRHHILSVH, LTCKQCNKVFTRPSKLAQHKLKH, YQCDHPGCFKNFQTWSVLQFHIKQSH, and LKCPKCGKGCVGKKGLSSHMLSH. The segment at 228–252 adopts a C2H2-type 8; degenerate zinc-finger fold; the sequence is WTCDYCDVGKFAKKNELVEHYNIFH. The interval 285–316 is disordered; that stretch reads LETEKLKVEEDEEDEEDSLDEKRSDVRSDSMS. The span at 293–303 shows a compositional bias: acidic residues; sequence EEDEEDEEDSL. The C2H2-type 9 zinc finger occupies 345–369; the sequence is INCPKNNCDRMFSREYDLRRHLKWH.

The protein localises to the nucleus. Transcription factor required for transcription of 5S rRNA by RNA polymerase III. The chain is Transcription factor IIIA (PZF1) from Candida albicans (strain SC5314 / ATCC MYA-2876) (Yeast).